The sequence spans 311 residues: Malate dehydrogenase (311 aa).

NAD(+) is bound by residues 7–13 and D34; that span reads GAAGGIG. Substrate contacts are provided by R81 and R87. NAD(+) is bound by residues N94 and 117 to 119; that span reads ITN. Positions 119 and 153 each coordinate substrate. The active-site Proton acceptor is the H177. M227 lines the NAD(+) pocket.

This sequence belongs to the LDH/MDH superfamily. MDH type 1 family. Homodimer.

It catalyses the reaction (S)-malate + NAD(+) = oxaloacetate + NADH + H(+). Functionally, catalyzes the reversible oxidation of malate to oxaloacetate. The polypeptide is Malate dehydrogenase (Aliivibrio salmonicida (strain LFI1238) (Vibrio salmonicida (strain LFI1238))).